The sequence spans 440 residues: tRNA-2-methylthio-N(6)-dimethylallyladenosine synthase (440 aa).

The 117-residue stretch at 7–123 folds into the MTTase N-terminal domain; sequence NTFYIHTFGC…LPQLIEQARS (117 aa). Cys-16, Cys-52, Cys-86, Cys-159, Cys-163, and Cys-166 together coordinate [4Fe-4S] cluster. One can recognise a Radical SAM core domain in the interval 145 to 375; the sequence is RQGSISAFVP…IDLQNTISGE (231 aa). The 63-residue stretch at 378–440 folds into the TRAM domain; that stretch reads QQAIGSVVEV…TSATLTGRPV (63 aa).

Belongs to the methylthiotransferase family. MiaB subfamily. Monomer. Requires [4Fe-4S] cluster as cofactor.

Its subcellular location is the cytoplasm. It carries out the reaction N(6)-dimethylallyladenosine(37) in tRNA + (sulfur carrier)-SH + AH2 + 2 S-adenosyl-L-methionine = 2-methylsulfanyl-N(6)-dimethylallyladenosine(37) in tRNA + (sulfur carrier)-H + 5'-deoxyadenosine + L-methionine + A + S-adenosyl-L-homocysteine + 2 H(+). Its function is as follows. Catalyzes the methylthiolation of N6-(dimethylallyl)adenosine (i(6)A), leading to the formation of 2-methylthio-N6-(dimethylallyl)adenosine (ms(2)i(6)A) at position 37 in tRNAs that read codons beginning with uridine. The polypeptide is tRNA-2-methylthio-N(6)-dimethylallyladenosine synthase (Pelodictyon phaeoclathratiforme (strain DSM 5477 / BU-1)).